Here is a 35-residue protein sequence, read N- to C-terminus: Photosystem II reaction center protein T (35 aa).

A helical membrane pass occupies residues 3–23 (ALVYTFLLVSTLGIIFFAIFF).

This sequence belongs to the PsbT family. As to quaternary structure, PSII is composed of 1 copy each of membrane proteins PsbA, PsbB, PsbC, PsbD, PsbE, PsbF, PsbH, PsbI, PsbJ, PsbK, PsbL, PsbM, PsbT, PsbY, PsbZ, Psb30/Ycf12, at least 3 peripheral proteins of the oxygen-evolving complex and a large number of cofactors. It forms dimeric complexes.

It is found in the plastid. Its subcellular location is the chloroplast thylakoid membrane. Functionally, found at the monomer-monomer interface of the photosystem II (PS II) dimer, plays a role in assembly and dimerization of PSII. PSII is a light-driven water plastoquinone oxidoreductase, using light energy to abstract electrons from H(2)O, generating a proton gradient subsequently used for ATP formation. This Nelumbo lutea (American lotus) protein is Photosystem II reaction center protein T.